Reading from the N-terminus, the 342-residue chain is S-adenosylmethionine:tRNA ribosyltransferase-isomerase (342 aa).

This sequence belongs to the QueA family. As to quaternary structure, monomer.

The protein localises to the cytoplasm. It catalyses the reaction 7-aminomethyl-7-carbaguanosine(34) in tRNA + S-adenosyl-L-methionine = epoxyqueuosine(34) in tRNA + adenine + L-methionine + 2 H(+). The protein operates within tRNA modification; tRNA-queuosine biosynthesis. Its function is as follows. Transfers and isomerizes the ribose moiety from AdoMet to the 7-aminomethyl group of 7-deazaguanine (preQ1-tRNA) to give epoxyqueuosine (oQ-tRNA). This Listeria monocytogenes serotype 4b (strain CLIP80459) protein is S-adenosylmethionine:tRNA ribosyltransferase-isomerase.